The following is a 202-amino-acid chain: Venom allergen 5 (202 aa).

Disulfide bonds link Cys-4/Cys-16, Cys-8/Cys-101, Cys-26/Cys-94, and Cys-168/Cys-185. The SCP domain occupies 46-187; it reads KQHNEFRQKV…WHRHYLVCNY (142 aa).

It belongs to the CRISP family. Venom allergen 5-like subfamily. As to expression, expressed by the venom gland.

Its subcellular location is the secreted. The protein is Venom allergen 5 of Vespa mandarinia (Asian giant hornet).